Reading from the N-terminus, the 180-residue chain is UPF0227 protein ECA1814 (180 aa).

The protein belongs to the UPF0227 family.

The sequence is that of UPF0227 protein ECA1814 from Pectobacterium atrosepticum (strain SCRI 1043 / ATCC BAA-672) (Erwinia carotovora subsp. atroseptica).